A 151-amino-acid polypeptide reads, in one-letter code: Transcriptional repressor NrdR (151 aa).

The segment at 3 to 34 is a zinc-finger region; sequence CPKCGSLNDKVLETRQSKEGVVIKRRRECLNC. One can recognise an ATP-cone domain in the interval 49-139; the sequence is IEVIKKNNTV…VFDGFEDIKD (91 aa).

The protein belongs to the NrdR family. Zn(2+) is required as a cofactor.

Functionally, negatively regulates transcription of bacterial ribonucleotide reductase nrd genes and operons by binding to NrdR-boxes. This is Transcriptional repressor NrdR from Sulfurihydrogenibium sp. (strain YO3AOP1).